The chain runs to 542 residues: Glutamyl-tRNA(Gln) amidotransferase subunit A, mitochondrial (542 aa).

Catalysis depends on charge relay system residues lysine 55 and serine 143. Serine 167 functions as the Acyl-ester intermediate in the catalytic mechanism.

The protein belongs to the amidase family. GatA subfamily. In terms of assembly, subunit of the heterotrimeric GatCAB amidotransferase (AdT) complex, composed of A, B and C subunits.

It is found in the mitochondrion. It carries out the reaction L-glutamyl-tRNA(Gln) + L-glutamine + ATP + H2O = L-glutaminyl-tRNA(Gln) + L-glutamate + ADP + phosphate + H(+). Its function is as follows. Allows the formation of correctly charged Gln-tRNA(Gln) through the transamidation of misacylated Glu-tRNA(Gln) in the mitochondria. The reaction takes place in the presence of glutamine and ATP through an activated gamma-phospho-Glu-tRNA(Gln). This chain is Glutamyl-tRNA(Gln) amidotransferase subunit A, mitochondrial, found in Neurospora crassa (strain ATCC 24698 / 74-OR23-1A / CBS 708.71 / DSM 1257 / FGSC 987).